The primary structure comprises 438 residues: Plasmalemma vesicle-associated protein (438 aa).

Topologically, residues 1–26 (MGLSMDRSPYSRTGDRDRGCWYYLRY) are cytoplasmic. A helical; Signal-anchor for type II membrane protein membrane pass occupies residues 27–47 (FFLFVSLIQFLIILGLVLFMI). Topologically, residues 48 to 438 (YGNVHATTES…LVNPAVPPSG (391 aa)) are extracellular. N-linked (GlcNAc...) asparagine glycosylation is found at asparagine 82, asparagine 88, asparagine 112, and asparagine 150. Positions 289-383 (AGIERVTREN…TEVDVRISAL (95 aa)) form a coiled coil. The segment at 393-438 (PAIQPRLPGPPPNPPPIDPASLEEFKKRILESQRPPLVNPAVPPSG) is disordered. 2 stretches are compositionally biased toward pro residues: residues 399 to 410 (LPGPPPNPPPID) and 429 to 438 (LVNPAVPPSG).

As to quaternary structure, homodimer. As to expression, expressed in lung (alveolar endothelial and bronchial epithelial cells), kidney (endothelium of peritubular capillaries), spleen, liver, adrenal (endothelial cells of the zona reticularis of the cortex and chromaffin cells in the medulla), pancreas (islets of Langerhans), testis (germ cells, interstitial cells in neonatal testis and spermatids), ovary (stromal endothelial, thecal layer of developing follicles, luteal cells within the corpus luteum), intestine (endothelium of capillaries of the intestinal villi) and pituitary (pituicyte cells in the neural lobe) (at protein level). Expressed in lung, kidney, spleen, liver, adrenal, testis, heart, muscle, pituitary, thyroid and ovary.

Its subcellular location is the cell membrane. It is found in the membrane. It localises to the caveola. The protein resides in the cytoplasm. The protein localises to the perinuclear region. Its function is as follows. Endothelial cell-specific membrane protein involved in the formation of the diaphragms that bridge endothelial fenestrae. It is also required for the formation of stomata of caveolae and transendothelial channels. Functions in microvascular permeability, endothelial fenestrae contributing to the passage of water and solutes and regulating transcellular versus paracellular flow in different organs. Plays a specific role in embryonic development. In Rattus norvegicus (Rat), this protein is Plasmalemma vesicle-associated protein (Plvap).